The sequence spans 495 residues: Probable aspartic-type endopeptidase OPSB (495 aa).

Residues 1–19 (MRGDSFIWSLATAIPLLST) form the signal peptide. A Peptidase A1 domain is found at 73–408 (YFCNLTLGTP…DLDNNEISIA (336 aa)). N76 carries N-linked (GlcNAc...) asparagine glycosylation. The active site involves D91. N136 carries an N-linked (GlcNAc...) asparagine glycan. D290 is an active-site residue. A glycan (N-linked (GlcNAc...) asparagine) is linked at N413. The disordered stretch occupies residues 447 to 470 (ATGLPGVETGVPGSRPPSSKAAGQ). The GPI-anchor amidated alanine moiety is linked to residue A467. Residues 468 to 495 (AGQAKRPDFVLGVAAVGLAGAGMLFAAM) constitute a propeptide, removed in mature form.

It belongs to the peptidase A1 family.

The protein resides in the cell membrane. Probable GPI-anchored aspartic-type endopeptidase which contributes to virulence. This Arthroderma benhamiae (strain ATCC MYA-4681 / CBS 112371) (Trichophyton mentagrophytes) protein is Probable aspartic-type endopeptidase OPSB (OPSB).